Reading from the N-terminus, the 218-residue chain is Probable transaldolase (218 aa).

The Schiff-base intermediate with substrate role is filled by Lys87.

This sequence belongs to the transaldolase family. Type 3B subfamily.

The protein resides in the cytoplasm. It carries out the reaction D-sedoheptulose 7-phosphate + D-glyceraldehyde 3-phosphate = D-erythrose 4-phosphate + beta-D-fructose 6-phosphate. It functions in the pathway carbohydrate degradation; pentose phosphate pathway; D-glyceraldehyde 3-phosphate and beta-D-fructose 6-phosphate from D-ribose 5-phosphate and D-xylulose 5-phosphate (non-oxidative stage): step 2/3. Transaldolase is important for the balance of metabolites in the pentose-phosphate pathway. This chain is Probable transaldolase, found in Phocaeicola vulgatus (strain ATCC 8482 / DSM 1447 / JCM 5826 / CCUG 4940 / NBRC 14291 / NCTC 11154) (Bacteroides vulgatus).